A 151-amino-acid polypeptide reads, in one-letter code: Large ribosomal subunit protein uL13 (151 aa).

The protein belongs to the universal ribosomal protein uL13 family. Part of the 50S ribosomal subunit.

Its function is as follows. This protein is one of the early assembly proteins of the 50S ribosomal subunit, although it is not seen to bind rRNA by itself. It is important during the early stages of 50S assembly. The polypeptide is Large ribosomal subunit protein uL13 (Microchaete diplosiphon (Fremyella diplosiphon)).